Consider the following 388-residue polypeptide: Protein RMD5 homolog (388 aa).

Residues 112-144 (DTHIVNQIIANFFYRQGMFDIGDCFVAETGESE) enclose the LisH domain. Residues 150–207 (SFVEMYRILEAMKRRDLEPALNWAVSNSDKLKEARSDLEMKLHSLHFLEIARGKNSKE) form the CTLH domain. The RING-Gid-type zinc finger occupies 330–374 (CPVSKEQSSDDNPPMMMSCGHVLCKQTINKMSKNGSKSSFKCPYC).

Interacts with RANBPM.

The protein resides in the cytoplasm. This chain is Protein RMD5 homolog, found in Arabidopsis thaliana (Mouse-ear cress).